A 138-amino-acid polypeptide reads, in one-letter code: Proline-rich protein 34 (138 aa).

Residues 22–37 show a composition bias toward pro residues; the sequence is SAPTSPPNPATRPAPG. Disordered regions lie at residues 22–55 and 81–107; these read SAPTSPPNPATRPAPGPGRRARCPQSAHPAPTRG and APRLPHPAARARRRAWHGARLPGSPAR.

This chain is Proline-rich protein 34 (PRR34), found in Homo sapiens (Human).